A 450-amino-acid chain; its full sequence is Tubulin alpha chain (450 aa).

Positions Met1–Cys4 match the MREC motif motif. Gln11 serves as a coordination point for GTP. Lys40 carries the post-translational modification N6-acetyllysine. The GTP site is built by Glu71, Ser140, Gly144, Thr145, Thr179, Asn206, and Asn228. Glu71 is a Mg(2+) binding site. Glu254 is a catalytic residue. The residue at position 444 (Glu444) is a 5-glutamyl polyglutamate.

Belongs to the tubulin family. As to quaternary structure, dimer of alpha and beta chains. A typical microtubule is a hollow water-filled tube with an outer diameter of 25 nm and an inner diameter of 15 nM. Alpha-beta heterodimers associate head-to-tail to form protofilaments running lengthwise along the microtubule wall with the beta-tubulin subunit facing the microtubule plus end conferring a structural polarity. Microtubules usually have 13 protofilaments but different protofilament numbers can be found in some organisms and specialized cells. Mg(2+) serves as cofactor. In terms of processing, some glutamate residues at the C-terminus are polyglycylated, resulting in polyglycine chains on the gamma-carboxyl group. Glycylation is mainly limited to tubulin incorporated into axonemes (cilia and flagella) whereas glutamylation is prevalent in neuronal cells, centrioles, axonemes, and the mitotic spindle. Both modifications can coexist on the same protein on adjacent residues, and lowering polyglycylation levels increases polyglutamylation, and reciprocally. The precise function of polyglycylation is still unclear. Some glutamate residues at the C-terminus are polyglutamylated, resulting in polyglutamate chains on the gamma-carboxyl group. Polyglutamylation plays a key role in microtubule severing by spastin (SPAST). SPAST preferentially recognizes and acts on microtubules decorated with short polyglutamate tails: severing activity by SPAST increases as the number of glutamates per tubulin rises from one to eight, but decreases beyond this glutamylation threshold. Post-translationally, acetylation of alpha chains at Lys-40 is located inside the microtubule lumen. This modification has been correlated with increased microtubule stability, intracellular transport and ciliary assembly. In terms of processing, undergoes a tyrosination/detyrosination cycle, the cyclic removal and re-addition of a C-terminal tyrosine residue by the enzymes tubulin tyrosine carboxypeptidase (MATCAP, VASH1 or VASH2) and tubulin tyrosine ligase (TTL), respectively. Tyrosination promotes microtubule interaction with CAP-Gly microtubule plus-end tracking proteins. Tyrosinated tubulins regulate the initiation of dynein-driven motility. Post-translationally, detyrosination is involved in metaphase plate congression by guiding chromosomes during mitosis. Detyrosination increases microtubules-dependent mechanotransduction in dystrophic cardiac and skeletal muscle. In cardiomyocytes, detyrosinated microtubules are required to resist to contractile compression during contraction.

It is found in the cytoplasm. The protein localises to the cytoskeleton. It catalyses the reaction GTP + H2O = GDP + phosphate + H(+). Tubulin is the major constituent of microtubules, a cylinder consisting of laterally associated linear protofilaments composed of alpha- and beta-tubulin heterodimers. Microtubules grow by the addition of GTP-tubulin dimers to the microtubule end, where a stabilizing cap forms. Below the cap, tubulin dimers are in GDP-bound state, owing to GTPase activity of alpha-tubulin. The chain is Tubulin alpha chain from Notophthalmus viridescens (Eastern newt).